The following is a 250-amino-acid chain: Beta-lactamase HcpA (250 aa).

The signal sequence occupies residues 1 to 25; it reads MLGSVKKTLFGVLCLGALCLRGLMA. TPR repeat units follow at residues 29-62, 67-98, 100-133, 134-169, and 170-202; these read AKELVSLGIESVKKQDFAQAKAHFEKACELKEGF, LGAFYEEGKGVGKDLKKAIQFYTKGCELNDGY, CRLLGNLYYNGQGVSKDAKKASQYYSKSCELNHA, EGCTVLGSLHHYGVGTPKDLRKALDLYEKACDLKDS, and PGCINAGYMYGVAKNFKEAIVRYSKACELKDGR. 6 disulfides stabilise this stretch: cysteine 56–cysteine 64, cysteine 92–cysteine 100, cysteine 128–cysteine 136, cysteine 164–cysteine 172, cysteine 196–cysteine 204, and cysteine 232–cysteine 240.

It belongs to the hcp beta-lactamase family.

It localises to the secreted. The catalysed reaction is a beta-lactam + H2O = a substituted beta-amino acid. With respect to regulation, inhibited by cloxacillin and oxacillin but not by ACA derivatives or metal chelators. Slowly hydrolyzes 6-aminopenicillinic acid and 7-aminocephalosporanic acid (ACA) derivatives. May be involved in the synthesis of the cell wall peptidoglycan. The sequence is that of Beta-lactamase HcpA (hcpA) from Helicobacter pylori (strain J99 / ATCC 700824) (Campylobacter pylori J99).